The following is a 558-amino-acid chain: uncharacterized protein (558 aa).

6 helical membrane-spanning segments follow: residues 63–83 (LTGIVVALLVVTFAFPVPSIY), 90–110 (VTFGVAPAYATLALAIGTYWI), 143–163 (VAAVHLILWDIGGALLATLYG), 168–188 (VFVTIILFSVTICGVLVATNC), 226–246 (SLGSGVPVTGIATTALYVLLV), and 258–278 (VLILSITTLIFGFLVMWILAW). In terms of domain architecture, HAMP spans 279–330 (LTAAPVRVVRAALKRVEQGDLRGDLVVFDGTELGELQRGFNAMVNGLRERER). Positions 362-486 (AVVFVDIVGS…KPVNQAARLC (125 aa)) constitute a Guanylate cyclase domain. Residues 529–558 (TQLASPHRRPPGSIHLTAEHAEEIRTDRLG) are disordered. The span at 545–558 (TAEHAEEIRTDRLG) shows a compositional bias: basic and acidic residues.

Belongs to the adenylyl cyclase class-3 family.

It is found in the cell membrane. This is an uncharacterized protein from Mycobacterium tuberculosis (strain CDC 1551 / Oshkosh).